The chain runs to 331 residues: XylDLEGF operon transcriptional activator 3 (331 aa).

Residues 214-315 (ERVVQFIEDN…GELPSDTLRR (102 aa)) enclose the HTH araC/xylS-type domain. 2 DNA-binding regions (H-T-H motif) span residues 231 to 252 (ERLA…EKHA) and 282 to 305 (VTEM…RSTF).

Its subcellular location is the cytoplasm. Regulatory protein of the TOL plasmid xyl operons. XylS activates the xylXYZLTEGFJQKIH operon required for the degradation of toluene, m-xylene and p-xylene. This Pseudomonas putida (Arthrobacter siderocapsulatus) protein is XylDLEGF operon transcriptional activator 3 (xylS3).